The following is a 232-amino-acid chain: Secreted LysM effector Mg3LysM (232 aa).

An N-terminal signal peptide occupies residues 1-16; the sequence is MQNIFLAATLLGAAFA. The region spanning 47-91 is the LysM 1 domain; it reads TNYTVKAGDTLGAIAKQYNSGVCDIAKVNGIDNPDYIKPDQVLSI. Residues asparagine 48, asparagine 100, asparagine 138, asparagine 195, asparagine 209, and asparagine 227 are each glycosylated (N-linked (GlcNAc...) asparagine). LysM domains are found at residues 120 to 165 and 177 to 221; these read STYT…VINT and GTYV…IIIL.

This sequence belongs to the secreted LysM effector family.

Secreted effector that enables the plant pathogenic fungus to manipulate host defenses for successful infection. Binds chitin fragments and blocks the activation of chitin-induced plant defense responses. Protects fungal hyphae against hydrolytic plant enzymes. In Zymoseptoria tritici (strain CBS 115943 / IPO323) (Speckled leaf blotch fungus), this protein is Secreted LysM effector Mg3LysM.